We begin with the raw amino-acid sequence, 115 residues long: Replication initiation control protein YabA (115 aa).

The Zn(2+) site is built by H90, C92, C106, and C109.

Belongs to the YabA family. In terms of assembly, homotetramer. Interacts with both DnaA and DnaN, acting as a bridge between these two proteins. The cofactor is Zn(2+).

The protein localises to the cytoplasm. Its subcellular location is the nucleoid. Its function is as follows. Involved in control of chromosome replication initiation. Inhibits the cooperative binding of DnaA to the oriC region, thus negatively regulating initiation of chromosome replication. Inhibits the ability of DnaA-ATP to form a helix on DNA; does not disassemble preformed DnaA-DNA helices. Decreases the residence time of DnaA on the chromosome at its binding sites (oriC, replication forks and promoter-binding sites). Tethers DnaA to the replication machinery via the DNA polymerase beta sliding clamp subunit (dnaN). Associates with oriC and other DnaA targets on the chromosome in a DnaA-dependent manner. The polypeptide is Replication initiation control protein YabA (Staphylococcus epidermidis (strain ATCC 35984 / DSM 28319 / BCRC 17069 / CCUG 31568 / BM 3577 / RP62A)).